The following is a 51-amino-acid chain: Large ribosomal subunit protein bL33 (51 aa).

It belongs to the bacterial ribosomal protein bL33 family.

The polypeptide is Large ribosomal subunit protein bL33 (Francisella tularensis subsp. tularensis (strain FSC 198)).